The following is a 293-amino-acid chain: Vibriobactin-specific isochorismatase (293 aa).

The region spanning 211-287 (KLTGLSLRTM…QWWQTIQANL (77 aa)) is the Carrier domain. Ser248 bears the O-(pantetheine 4'-phosphoryl)serine mark.

The protein belongs to the isochorismatase family. Pantetheine 4'-phosphate serves as cofactor.

The enzyme catalyses isochorismate + H2O = (2S,3S)-2,3-dihydroxy-2,3-dihydrobenzoate + pyruvate. Its pathway is siderophore biosynthesis; vibriobactin biosynthesis. Functionally, involved in the biosynthesis of the catechol siderophore vibriobactin. Vibriobactin is a chelating compound involved in transporting iron from the bacterial environment into the cell cytoplasm. This is Vibriobactin-specific isochorismatase (vibB) from Vibrio cholerae serotype O1 (strain ATCC 39541 / Classical Ogawa 395 / O395).